A 206-amino-acid chain; its full sequence is Large ribosomal subunit protein uL4 (206 aa).

The segment at 45 to 85 is disordered; that stretch reads QGNRAQKDREQVKHTTKKPWRQKGTGRARAGMSSSPLWRGG. A compositionally biased stretch (basic residues) spans 58-70; it reads HTTKKPWRQKGTG.

It belongs to the universal ribosomal protein uL4 family. In terms of assembly, part of the 50S ribosomal subunit.

In terms of biological role, one of the primary rRNA binding proteins, this protein initially binds near the 5'-end of the 23S rRNA. It is important during the early stages of 50S assembly. It makes multiple contacts with different domains of the 23S rRNA in the assembled 50S subunit and ribosome. Functionally, forms part of the polypeptide exit tunnel. In Burkholderia mallei (strain NCTC 10247), this protein is Large ribosomal subunit protein uL4.